The sequence spans 208 residues: Imidazoleglycerol-phosphate dehydratase (208 aa).

The segment at 1–20 is disordered; it reads MSRRATVKAPRAGAAARRGA. A compositionally biased stretch (low complexity) spans 7–19; it reads VKAPRAGAAARRG.

The protein belongs to the imidazoleglycerol-phosphate dehydratase family.

The protein localises to the cytoplasm. It catalyses the reaction D-erythro-1-(imidazol-4-yl)glycerol 3-phosphate = 3-(imidazol-4-yl)-2-oxopropyl phosphate + H2O. It functions in the pathway amino-acid biosynthesis; L-histidine biosynthesis; L-histidine from 5-phospho-alpha-D-ribose 1-diphosphate: step 6/9. This is Imidazoleglycerol-phosphate dehydratase from Anaeromyxobacter sp. (strain K).